We begin with the raw amino-acid sequence, 441 residues long: Glutamyl-tRNA reductase (441 aa).

Residues 47–50 (TCNR), Ser104, 109–111 (EAQ), and Gln115 each bind substrate. Residue Cys48 is the Nucleophile of the active site. Residue 184-189 (GAGEMG) coordinates NADP(+).

It belongs to the glutamyl-tRNA reductase family. Homodimer.

It carries out the reaction (S)-4-amino-5-oxopentanoate + tRNA(Glu) + NADP(+) = L-glutamyl-tRNA(Glu) + NADPH + H(+). It participates in porphyrin-containing compound metabolism; protoporphyrin-IX biosynthesis; 5-aminolevulinate from L-glutamyl-tRNA(Glu): step 1/2. Catalyzes the NADPH-dependent reduction of glutamyl-tRNA(Glu) to glutamate 1-semialdehyde (GSA). The protein is Glutamyl-tRNA reductase of Myxococcus xanthus (strain DK1622).